A 702-amino-acid polypeptide reads, in one-letter code: Ribosomal RNA large subunit methyltransferase K/L (702 aa).

The 112-residue stretch at 43–154 (LVYQSLMWSR…KETASIALDL (112 aa)) folds into the THUMP domain.

Belongs to the methyltransferase superfamily. RlmKL family.

Its subcellular location is the cytoplasm. It carries out the reaction guanosine(2445) in 23S rRNA + S-adenosyl-L-methionine = N(2)-methylguanosine(2445) in 23S rRNA + S-adenosyl-L-homocysteine + H(+). It catalyses the reaction guanosine(2069) in 23S rRNA + S-adenosyl-L-methionine = N(2)-methylguanosine(2069) in 23S rRNA + S-adenosyl-L-homocysteine + H(+). Its function is as follows. Specifically methylates the guanine in position 2445 (m2G2445) and the guanine in position 2069 (m7G2069) of 23S rRNA. This chain is Ribosomal RNA large subunit methyltransferase K/L, found in Shigella flexneri serotype 5b (strain 8401).